The primary structure comprises 249 residues: Syntaxin-10 (249 aa).

Position 2 is an N-acetylserine (serine 2). The Cytoplasmic segment spans residues 2–228 (SLEDPFFVVR…VSHMTSDRRQ (227 aa)). Residues 41-69 (EELDWTTNELRNGLRSIEWDLEDLEETIG) adopt a coiled-coil conformation. Serine 108 carries the phosphoserine modification. Phosphothreonine is present on threonine 110. Serine 134, serine 140, and serine 143 each carry phosphoserine. One can recognise a t-SNARE coiled-coil homology domain in the interval 157-219 (QLIMDEQDQQ…DGVLRKLAKV (63 aa)). A helical; Anchor for type IV membrane protein transmembrane segment spans residues 229 to 249 (WCAIAVLVGVLLLVLILLFSL).

It belongs to the syntaxin family. In terms of assembly, interacts with VPS52. In terms of tissue distribution, expressed at high levels in heart, skeletal muscle and pancreas.

The protein localises to the golgi apparatus membrane. SNARE involved in vesicular transport from the late endosomes to the trans-Golgi network. In Homo sapiens (Human), this protein is Syntaxin-10 (STX10).